Reading from the N-terminus, the 198-residue chain is Guanine nucleotide-binding protein subunit alpha-11 (198 aa).

The tract at residues 1–11 (LLGTGESGKST) is G1 motif. In terms of domain architecture, G-alpha spans 1–198 (LLGTGESGKS…LSEYDHVLVE (198 aa)). GTP-binding positions include 3–10 (GTGESGKS) and 137–140 (LRVR). Mg(2+) is bound at residue Ser10. The segment at 135 to 143 (DVLRVRVPT) is G2 motif. Thr143 provides a ligand contact to Mg(2+). Residues 158-167 (FRMVDVGGQR) form a G3 motif region.

It belongs to the G-alpha family. G(q) subfamily. As to quaternary structure, g proteins are composed of 3 units; alpha, beta and gamma. The alpha chain contains the guanine nucleotide binding site. Interacts with RGS22. Interacts with NTSR1.

The protein localises to the cell membrane. The protein resides in the cytoplasm. It carries out the reaction GTP + H2O = GDP + phosphate + H(+). Its function is as follows. Guanine nucleotide-binding proteins (G proteins) function as transducers downstream of G protein-coupled receptors (GPCRs) in numerous signaling cascades. The alpha chain contains the guanine nucleotide binding site and alternates between an active, GTP-bound state and an inactive, GDP-bound state. Signaling by an activated GPCR promotes GDP release and GTP binding. The alpha subunit has a low GTPase activity that converts bound GTP to GDP, thereby terminating the signal. Both GDP release and GTP hydrolysis are modulated by numerous regulatory proteins. Signaling is mediated via phospholipase C-beta-dependent inositol lipid hydrolysis for signal propagation: activates phospholipase C-beta: following GPCR activation, GNA11 activates PLC-beta (PLCB1, PLCB2, PLCB3 or PLCB4), leading to production of diacylglycerol (DAG) and inositol 1,4,5-trisphosphate (IP3). Transduces FFAR4 signaling in response to long-chain fatty acids (LCFAs). Together with GNAQ, required for heart development. In the respiratory epithelium, transmits OXGR1-dependent signals that lead to downstream intracellular Ca(2+) release and mucocilliary clearance of airborne pathogens. In Canis lupus familiaris (Dog), this protein is Guanine nucleotide-binding protein subunit alpha-11 (GNA11).